The primary structure comprises 274 residues: tRNA-cytidine(32) 2-sulfurtransferase (274 aa).

The short motif at 40–45 is the PP-loop motif element; it reads SGGKDS. Cys115, Cys118, and Cys206 together coordinate [4Fe-4S] cluster.

Belongs to the TtcA family. Homodimer. Mg(2+) is required as a cofactor. [4Fe-4S] cluster serves as cofactor.

The protein resides in the cytoplasm. It catalyses the reaction cytidine(32) in tRNA + S-sulfanyl-L-cysteinyl-[cysteine desulfurase] + AH2 + ATP = 2-thiocytidine(32) in tRNA + L-cysteinyl-[cysteine desulfurase] + A + AMP + diphosphate + H(+). Its pathway is tRNA modification. Catalyzes the ATP-dependent 2-thiolation of cytidine in position 32 of tRNA, to form 2-thiocytidine (s(2)C32). The sulfur atoms are provided by the cysteine/cysteine desulfurase (IscS) system. This chain is tRNA-cytidine(32) 2-sulfurtransferase, found in Pseudomonas putida (strain ATCC 700007 / DSM 6899 / JCM 31910 / BCRC 17059 / LMG 24140 / F1).